The sequence spans 88 residues: Protein MATERNALLY EXPRESSED GENE 1 (88 aa).

The first 27 residues, 1–27, serve as a signal peptide directing secretion; it reads MEYKKRVDALVFFSLLLLGYFAAHAHG. Asn-36 is a glycosylation site (N-linked (GlcNAc...) asparagine). 2 disulfide bridges follow: Cys-65–Cys-87 and Cys-68–Cys-76.

This sequence belongs to the MEG family. Glycosylated. Expressed exclusively in endosperm. Found in basal endosperm transfer cells.

The protein localises to the secreted. It localises to the cell wall. The protein resides in the cell membrane. Its subcellular location is the extracellular space. It is found in the extracellular matrix. In terms of biological role, regulates maternal nutrient uptake, sucrose partitioning, and seed biomass yield. Necessary and sufficient for the establishment and differentiation of the endosperm nutrient transfer cells located at the mother:seed interface. Exclusive expression of the maternal allele at the early stages of endosperm development. The maternal allele is hypomethylated. At later stages, expression becomes biallelic. Regulated by the transcription factor MRP1. This Zea mays (Maize) protein is Protein MATERNALLY EXPRESSED GENE 1 (MEG1).